We begin with the raw amino-acid sequence, 460 residues long: Serine hydroxymethyltransferase, cytosolic (460 aa).

The residue at position 244 (Lys244) is an N6-(pyridoxal phosphate)lysine.

This sequence belongs to the SHMT family. As to quaternary structure, homotetramer. Pyridoxal 5'-phosphate serves as cofactor.

It localises to the cytoplasm. It carries out the reaction (6R)-5,10-methylene-5,6,7,8-tetrahydrofolate + glycine + H2O = (6S)-5,6,7,8-tetrahydrofolate + L-serine. The protein operates within one-carbon metabolism; tetrahydrofolate interconversion. Functionally, interconversion of serine and glycine. The protein is Serine hydroxymethyltransferase, cytosolic (SHMT-1) of Encephalitozoon cuniculi (strain GB-M1) (Microsporidian parasite).